The sequence spans 267 residues: Phosphate import ATP-binding protein PstB 1 (267 aa).

Positions 21–262 constitute an ABC transporter domain; sequence LETKDLHVYY…AALQSTSDYV (242 aa). 53–60 serves as a coordination point for ATP; it reads GPSGCGKS.

It belongs to the ABC transporter superfamily. Phosphate importer (TC 3.A.1.7) family. As to quaternary structure, the complex is composed of two ATP-binding proteins (PstB), two transmembrane proteins (PstC and PstA) and a solute-binding protein (PstS).

The protein resides in the cell membrane. The catalysed reaction is phosphate(out) + ATP + H2O = ADP + 2 phosphate(in) + H(+). Its function is as follows. Part of the ABC transporter complex PstSACB involved in phosphate import. Responsible for energy coupling to the transport system. The chain is Phosphate import ATP-binding protein PstB 1 from Streptococcus thermophilus (strain CNRZ 1066).